The primary structure comprises 419 residues: Phosphatidylcholine:ceramide cholinephosphotransferase 1 (419 aa).

Residues 13-76 (WSPKKVADWL…LDMIETLKME (64 aa)) enclose the SAM domain. At serine 14 the chain carries Phosphoserine. 5 consecutive transmembrane segments (helical) span residues 142 to 162 (LLAF…ISVV), 190 to 210 (FSIC…QWLL), 221 to 241 (FFCI…VTTL), 282 to 302 (MCGD…YLFI), and 310 to 330 (LWWY…CILL). The active site involves histidine 291. Residues 331-419 (AHDHYTVDVV…VKYSRLVNDT (89 aa)) are Cytoplasmic-facing. Active-site residues include histidine 334 and aspartate 338.

The protein belongs to the sphingomyelin synthase family.

The protein resides in the golgi apparatus membrane. The enzyme catalyses an N-acylsphing-4-enine + a 1,2-diacyl-sn-glycero-3-phosphocholine = a sphingomyelin + a 1,2-diacyl-sn-glycerol. It catalyses the reaction 1-(9Z-octadecenoyl)-2-acyl-sn-3-glycerol + a sphingomyelin = a 1-(9Z-octadecenoyl)-2-acyl-sn-glycero-3-phosphocholine + an N-acylsphing-4-enine. The catalysed reaction is N-hexadecanoylsphinganine + a 1,2-diacyl-sn-glycero-3-phosphocholine = N-hexadecanoyl-sphinganine-1-phosphocholine + a 1,2-diacyl-sn-glycerol. It carries out the reaction N-hexadecanoyl-(4R)-hydroxysphinganine + a 1,2-diacyl-sn-glycero-3-phosphocholine = N-hexadecanoyl-(4R)-hydroxysphinganine-phosphocholine + a 1,2-diacyl-sn-glycerol. The enzyme catalyses an N-acylsphing-4-enine + a 1,2-diacyl-sn-glycero-3-phosphoethanolamine = an N-acylsphing-4-enine 1-phosphoethanolamine + a 1,2-diacyl-sn-glycerol. It participates in sphingolipid metabolism. Its function is as follows. Major sphingomyelin synthase at the Golgi apparatus. Catalyzes the reversible transfer of phosphocholine moiety in sphingomyelin biosynthesis: in the forward reaction transfers phosphocholine head group of phosphatidylcholine (PC) on to ceramide (CER) to form ceramide phosphocholine (sphingomyelin, SM) and diacylglycerol (DAG) as by-product, and in the reverse reaction transfers phosphocholine from SM to DAG to form PC and CER. The direction of the reaction depends on the levels of CER and DAG in Golgi membranes. Converts the newly synthesized CER, that is transported from the endoplasmic reticulum to the trans-Golgi by the Cer transport protein (CERT), to SM. Can form a heteromeric complex with glucosylceramide synthase (GCS) increasing SMS activity and reducing glucosylceramide synthesis, a critical mechanism that controls the metabolic fate of CER in the Golgi. Does not use free phosphorylcholine or CDP-choline as donor. Can also transfer phosphoethanolamine head group of phosphatidylethanolamine (PE) on to CER to form ceramide phosphoethanolamine (CPE). Regulates receptor-mediated signal transduction via mitogenic DAG and proapoptotic CER, as well as via SM, a structural component of membrane rafts that serve as platforms for signal transduction and protein sorting. Plays a role in secretory transport via regulation of DAG pool at the Golgi apparatus and its downstream effects on PRKD1. The sequence is that of Phosphatidylcholine:ceramide cholinephosphotransferase 1 (Sgms1) from Rattus norvegicus (Rat).